A 102-amino-acid chain; its full sequence is Large ribosomal subunit protein bL28 (102 aa).

The tract at residues 1-20 (MSRRCELTAKGPQVGHKVSH) is disordered.

This sequence belongs to the bacterial ribosomal protein bL28 family.

This is Large ribosomal subunit protein bL28 from Bradyrhizobium sp. (strain BTAi1 / ATCC BAA-1182).